We begin with the raw amino-acid sequence, 327 residues long: Dipeptide transport ATP-binding protein DppD (327 aa).

The region spanning 4–254 (LNVDKLSVHF…PRHPYTQALL (251 aa)) is the ABC transporter domain. ATP is bound at residue 40–47 (GESGSGKS).

Belongs to the ABC transporter superfamily. In terms of assembly, the complex is composed of two ATP-binding proteins (DppD and DppF), two transmembrane proteins (DppB and DppC) and a solute-binding protein (DppA). MppA can replace DppA as binding protein for heme and ALA transport.

The protein resides in the cell inner membrane. It catalyses the reaction a dipeptide(out) + ATP + H2O = a dipeptide(in) + ADP + phosphate + H(+). In terms of biological role, part of the ABC transporter DppABCDF involved in dipeptide transport. Responsible for energy coupling to the transport system. Functionally, when a foreign outer membrane heme receptor is expressed in E.coli, DppABCDF can also transport heme and its precursor, 5-aminolevulinic acid (ALA), from the periplasm into the cytoplasm. The sequence is that of Dipeptide transport ATP-binding protein DppD (dppD) from Escherichia coli (strain K12).